The following is a 445-amino-acid chain: Probable D-serine dehydratase (445 aa).

At lysine 119 the chain carries N6-(pyridoxal phosphate)lysine.

The protein belongs to the serine/threonine dehydratase family. DsdA subfamily. It depends on pyridoxal 5'-phosphate as a cofactor.

It carries out the reaction D-serine = pyruvate + NH4(+). In Pseudomonas putida (strain GB-1), this protein is Probable D-serine dehydratase.